The primary structure comprises 106 residues: U1-lycotoxin-Ls1b (106 aa).

The N-terminal stretch at 1 to 19 (MKVLVVVALLVTLISYSSS) is a signal peptide. Residues 20 to 40 (EGIDDPEADELLSLMANEQTR) constitute a propeptide that is removed on maturation. Intrachain disulfides connect C43/C58, C50/C67, C57/C85, and C69/C83.

It belongs to the neurotoxin 19 (CSTX) family. 04 (U1-Lctx) subfamily. Expressed by the venom gland.

It localises to the secreted. This chain is U1-lycotoxin-Ls1b, found in Lycosa singoriensis (Wolf spider).